The sequence spans 600 residues: ATP-dependent lipid A-core flippase (600 aa).

A run of 4 helical transmembrane segments spans residues valine 26–leucine 46, leucine 82–leucine 102, valine 167–isoleucine 187, and proline 266–leucine 286. The region spanning leucine 30–lysine 321 is the ABC transmembrane type-1 domain. The ABC transporter domain maps to leucine 353 to methionine 589. Glycine 387 to serine 394 provides a ligand contact to ATP.

It belongs to the ABC transporter superfamily. Lipid exporter (TC 3.A.1.106) family. As to quaternary structure, homodimer.

Its subcellular location is the cell inner membrane. The enzyme catalyses ATP + H2O + lipid A-core oligosaccharideSide 1 = ADP + phosphate + lipid A-core oligosaccharideSide 2.. Its function is as follows. Involved in lipopolysaccharide (LPS) biosynthesis. Translocates lipid A-core from the inner to the outer leaflet of the inner membrane. Transmembrane domains (TMD) form a pore in the inner membrane and the ATP-binding domain (NBD) is responsible for energy generation. This Pseudomonas syringae pv. tomato (strain ATCC BAA-871 / DC3000) protein is ATP-dependent lipid A-core flippase.